We begin with the raw amino-acid sequence, 305 residues long: U6 small nuclear RNA (adenine-(43)-N(6))-methyltransferase (305 aa).

Residues arginine 87, glycine 112, glutamate 135, threonine 166, and asparagine 188 each coordinate S-adenosyl-L-methionine. A disordered region spans residues 197–221; the sequence is PNPLGGNTRNPERRPAPNNARTGSQ.

This sequence belongs to the methyltransferase superfamily. METTL16/RlmF family.

It catalyses the reaction adenosine in U6 snRNA + S-adenosyl-L-methionine = N(6)-methyladenosine in U6 snRNA + S-adenosyl-L-homocysteine + H(+). In terms of biological role, RNA N6-methyltransferase that mediates N6-methylation of adenine of U6 small nuclear RNA (U6 snRNA). This Drosophila melanogaster (Fruit fly) protein is U6 small nuclear RNA (adenine-(43)-N(6))-methyltransferase.